A 333-amino-acid chain; its full sequence is EP300-interacting inhibitor of differentiation 3 (333 aa).

This sequence belongs to the NSE4 family. In terms of assembly, component of the SMC5-SMC6 complex which consists at least of SMC5, SMC6, NSMCE2, NSMCE1, NSMCE4A or EID3 and NSMCE3; EID3 seems to be a testis-specific subunit. NSMCE1, NSMCE4A or EID3 and NSMCE3 probably form a subcomplex that bridges the head domains of the SMC5:SMC6 heterodimer. Homodimer, and heterodimer with EID2. Interacts with the C-terminal region of CREBBP. Highly expressed in testis.

It localises to the nucleus. The protein resides in the cytoplasm. The protein localises to the chromosome. Its subcellular location is the telomere. In terms of biological role, tissue-specific component of the SMC5-SMC6 complex, a complex involved in repair of DNA double-strand breaks by homologous recombination. The complex may promote sister chromatid homologous recombination by recruiting the SMC1-SMC3 cohesin complex to double-strand breaks. The complex is required for telomere maintenance via recombination and mediates sumoylation of shelterin complex (telosome) components. Acts as a repressor of nuclear receptor-dependent transcription possibly by interfering with CREBBP-dependent coactivation. May function as a coinhibitor of other CREBBP/EP300-dependent transcription factors. The polypeptide is EP300-interacting inhibitor of differentiation 3 (Homo sapiens (Human)).